The primary structure comprises 653 residues: NADH-ubiquinone oxidoreductase chain 5 (653 aa).

A run of 16 helical transmembrane segments spans residues 1–21 (MYLVIIFLPLLGSIISGFFGR), 30–50 (LITSSFIIITTMLAIFNFFEV), 81–103 (LTVSMLIPVLIVSSLVHIYSIGY), 120–140 (FTFMMIILVTANNYLLMFLGV), 177–197 (FLTIGMFIIIWSFGNLDYSTV), 200–220 (LAPYFNQEFITLIGICLLIGA), 241–261 (TPVSALIHAATMVTAGVYLLM), 274–294 (LILCLWLGAITTIFSSIIGLF), 301–319 (VIAYSTMSQLGMMVIAIGL), 331–351 (NHAFYKALLFLGAGAVIHSVS), 365–385 (FLPLAYSIMLIASLSLVAIPF), 403–423 (FYISSTLVYFIATIGAMFTTL), 452–472 (IFINLPLIILAIFSIFFGYLT), 511–531 (LLPLFFTITLSIIGIMFSEFF), 610–630 (GVITSYALYILIGLIFYVFLL), and 631–651 (YLNIDNNILLLLLFGIFSTIN).

Belongs to the complex I subunit 5 family.

The protein localises to the mitochondrion inner membrane. The enzyme catalyses a ubiquinone + NADH + 5 H(+)(in) = a ubiquinol + NAD(+) + 4 H(+)(out). Functionally, core subunit of the mitochondrial membrane respiratory chain NADH dehydrogenase (Complex I) that is believed to belong to the minimal assembly required for catalysis. Complex I functions in the transfer of electrons from NADH to the respiratory chain. The immediate electron acceptor for the enzyme is believed to be ubiquinone. In Trichophyton rubrum (Athlete's foot fungus), this protein is NADH-ubiquinone oxidoreductase chain 5 (ND5).